Here is a 164-residue protein sequence, read N- to C-terminus: Peroxynitrite isomerase 2 (164 aa).

Positions 17-23 match the GXWXGXG motif; sequence GSWAGRG. His-155 lines the heme b pocket.

The protein belongs to the nitrobindin family. As to quaternary structure, homodimer. Requires heme b as cofactor.

It catalyses the reaction peroxynitrite = nitrate. It functions in the pathway nitrogen metabolism. In terms of biological role, heme-binding protein able to scavenge peroxynitrite and to protect free L-tyrosine against peroxynitrite-mediated nitration, by acting as a peroxynitrite isomerase that converts peroxynitrite to nitrate. Therefore, this protein likely plays a role in peroxynitrite sensing and in the detoxification of reactive nitrogen and oxygen species (RNS and ROS, respectively). Is able to bind nitric oxide (NO) in vitro, but may act as a sensor of peroxynitrite levels in vivo. This is Peroxynitrite isomerase 2 from Mycobacterium bovis (strain BCG / Pasteur 1173P2).